We begin with the raw amino-acid sequence, 468 residues long: Dimethylamine methyltransferase MtbB2 (468 aa).

Residue Pyl-356 is a non-standard amino acid, pyrrolysine.

Belongs to the dimethylamine methyltransferase family.

The catalysed reaction is Co(I)-[dimethylamine-specific corrinoid protein] + dimethylamine + H(+) = methyl-Co(III)-[dimethylamine-specific corrinoid protein] + methylamine. It participates in one-carbon metabolism; methanogenesis from dimethylamine. In terms of biological role, catalyzes the transfer of a methyl group from dimethylamine to the corrinoid cofactor of MtbC. The polypeptide is Dimethylamine methyltransferase MtbB2 (mtbB2) (Methanosarcina acetivorans (strain ATCC 35395 / DSM 2834 / JCM 12185 / C2A)).